The chain runs to 184 residues: Peptide deformylase (184 aa).

Fe cation-binding residues include cysteine 98 and histidine 140. Glutamate 141 is a catalytic residue. Residue histidine 144 participates in Fe cation binding.

The protein belongs to the polypeptide deformylase family. The cofactor is Fe(2+).

The enzyme catalyses N-terminal N-formyl-L-methionyl-[peptide] + H2O = N-terminal L-methionyl-[peptide] + formate. Functionally, removes the formyl group from the N-terminal Met of newly synthesized proteins. Requires at least a dipeptide for an efficient rate of reaction. N-terminal L-methionine is a prerequisite for activity but the enzyme has broad specificity at other positions. The chain is Peptide deformylase from Bacteroides thetaiotaomicron (strain ATCC 29148 / DSM 2079 / JCM 5827 / CCUG 10774 / NCTC 10582 / VPI-5482 / E50).